Consider the following 649-residue polypeptide: Lipoteichoic acid synthase 2 (649 aa).

Over 1-9 (MKTFIKERG) the chain is Cytoplasmic. The helical transmembrane segment at 10 to 30 (LAFFLIAVVLLWIKTYVGYVL) threads the bilayer. Residues 31–42 (NFNLGIDNTIQK) lie on the Extracellular side of the membrane. A helical membrane pass occupies residues 43–63 (ILLFVNPLSSSLFFLGFGLLF). At 64-69 (KKKLQQ) the chain is on the cytoplasmic side. Residues 70-90 (TAIIVIHFLMSFLLYANIVYY) traverse the membrane as a helical segment. Residues 91–118 (RFFNDFITIPVIMQAKTNGGQLGDSAFS) lie on the Extracellular side of the membrane. Residues 119–139 (LMRPTDAFYFIDTIILIILAI) traverse the membrane as a helical segment. Topologically, residues 140-151 (KVNKPAETSSKK) are cytoplasmic. Residues 152–172 (SFRIIFASSILVFLINLAVAE) traverse the membrane as a helical segment. Residues 173–649 (SDRPELLTRS…SETSKDNEDK (477 aa)) are Extracellular-facing. Mn(2+) contacts are provided by E253 and T297. T297 is an active-site residue. H412 serves as a coordination point for substrate. D471 and H472 together coordinate Mn(2+). Residues 622-649 (FKKVNPSDYDYTKHDEDSSETSKDNEDK) form a disordered region. The span at 631–649 (DYTKHDEDSSETSKDNEDK) shows a compositional bias: basic and acidic residues.

Belongs to the LTA synthase family. Proteolytically cleaved.

The protein resides in the cell membrane. The protein localises to the secreted. Its pathway is cell wall biogenesis; lipoteichoic acid biosynthesis. In terms of biological role, catalyzes the polymerization of lipoteichoic acid (LTA) polyglycerol phosphate, a reaction that presumably uses phosphatidylglycerol (PG) as substrate. In Bacillus subtilis (strain 168), this protein is Lipoteichoic acid synthase 2 (ltaS2).